Consider the following 219-residue polypeptide: Small ribosomal subunit protein uS4 (219 aa).

An S4 RNA-binding domain is found at 112-174 (RRLQTQVLRL…GSSPLMSESH (63 aa)). The disordered stretch occupies residues 193 to 219 (KAAAEAKQARERPPERGGGRKKRGGRR). The segment covering 199 to 210 (KQARERPPERGG) has biased composition (basic and acidic residues).

The protein belongs to the universal ribosomal protein uS4 family. In terms of assembly, part of the 30S ribosomal subunit. Contacts protein S5. The interaction surface between S4 and S5 is involved in control of translational fidelity.

One of the primary rRNA binding proteins, it binds directly to 16S rRNA where it nucleates assembly of the body of the 30S subunit. Its function is as follows. With S5 and S12 plays an important role in translational accuracy. The protein is Small ribosomal subunit protein uS4 of Methanosarcina mazei (strain ATCC BAA-159 / DSM 3647 / Goe1 / Go1 / JCM 11833 / OCM 88) (Methanosarcina frisia).